The sequence spans 29 residues: Frontoxin VI (29 aa).

A disulfide bridge connects residues cysteine 3 and cysteine 24.

In terms of tissue distribution, expressed by the venom gland.

The protein resides in the secreted. Its function is as follows. Binds to muscle nicotinic acetylcholine receptor (nAChR) and inhibit acetylcholine from binding to the receptor, thereby impairing neuromuscular transmission. In Micrurus frontalis (Coral snake), this protein is Frontoxin VI.